The primary structure comprises 370 residues: Phospho-N-acetylmuramoyl-pentapeptide-transferase (370 aa).

10 consecutive transmembrane segments (helical) span residues 3–23 (QIIIAGAVSFLVAIFTTPVLI), 54–74 (GLAILAGILVAYVVAGLYGLL), 79–99 (AFTASGLLVLGLTLGLGAVGF), 118–138 (AKLISQLVLALLFGFLVLRFP), 161–181 (LAVGGTVIGTIVFLIFMYILI), 197–217 (LAAGVTAIVMGSYSLMTFWQF), 238–258 (LAVLAAAGLGGCLGFLWWNAA), 262–282 (IFMGDTGSLALGGLVAGISVT), 290–310 (IIIGALFVIETVSVVIQIVVF), and 341–361 (FWLLAAMAAMAGVAIFYGDWL).

It belongs to the glycosyltransferase 4 family. MraY subfamily. Mg(2+) serves as cofactor.

It is found in the cell membrane. It carries out the reaction UDP-N-acetyl-alpha-D-muramoyl-L-alanyl-gamma-D-glutamyl-meso-2,6-diaminopimeloyl-D-alanyl-D-alanine + di-trans,octa-cis-undecaprenyl phosphate = di-trans,octa-cis-undecaprenyl diphospho-N-acetyl-alpha-D-muramoyl-L-alanyl-D-glutamyl-meso-2,6-diaminopimeloyl-D-alanyl-D-alanine + UMP. Its pathway is cell wall biogenesis; peptidoglycan biosynthesis. Its function is as follows. Catalyzes the initial step of the lipid cycle reactions in the biosynthesis of the cell wall peptidoglycan: transfers peptidoglycan precursor phospho-MurNAc-pentapeptide from UDP-MurNAc-pentapeptide onto the lipid carrier undecaprenyl phosphate, yielding undecaprenyl-pyrophosphoryl-MurNAc-pentapeptide, known as lipid I. The protein is Phospho-N-acetylmuramoyl-pentapeptide-transferase of Corynebacterium aurimucosum (strain ATCC 700975 / DSM 44827 / CIP 107346 / CN-1) (Corynebacterium nigricans).